Here is a 401-residue protein sequence, read N- to C-terminus: Nodal homolog 3-C (401 aa).

An N-terminal signal peptide occupies residues 1–18 (MAFLSLFLCLVFSSPLMA). The propeptide occupies 19–274 (MPPALQGRKA…KVNGFRRLRR (256 aa)). 3 N-linked (GlcNAc...) asparagine glycosylation sites follow: asparagine 168, asparagine 337, and asparagine 344. Intrachain disulfides connect cysteine 299-cysteine 365 and cysteine 328-cysteine 396.

Belongs to the TGF-beta family. As to quaternary structure, monomer. The propeptide region interacts with bmp4 in a non-covalent manner. Expressed in the dorsal marginal region of late blastula, becoming restricted to the Spemann organizer at the early gastrula stage.

It localises to the secreted. Its function is as follows. Exhibits mesoderm-dorsalizing activity and neural-inducing activity, but lacks mesoderm-inducing activity. Regulates the expression of specific mesodermal and neural genes. Induces convergent extension movements at the embryonic midline by activating the fgf signaling pathway to induce t/bra expression in the organizer region. Acts with wnt11 to induce Spemann organizer cells and induce axis formation. The unprocessed protein antagonizes bmp-signaling. The protein is Nodal homolog 3-C of Xenopus tropicalis (Western clawed frog).